A 1007-amino-acid chain; its full sequence is Glutamate receptor ionotropic, delta-2 (1007 aa).

The N-terminal stretch at 1–23 is a signal peptide; that stretch reads MEVFPFLLVLSVWWSRTWDSANA. An interaction with CBLN1 homotrimer region spans residues 24-345; the sequence is DSIIHIGAIF…NAFHKKLEDR (322 aa). Topologically, residues 24 to 566 are extracellular; it reads DSIIHIGAIF…DMFACLAPFD (543 aa). Intrachain disulfides connect C83–C355, C99–C131, and C298–C310. N-linked (GlcNAc...) asparagine glycosylation occurs at N293. N426 is a glycosylation site (N-linked (GlcNAc...) asparagine). Ca(2+) contacts are provided by E531, V534, and D535. Residues 567 to 587 form a helical membrane-spanning segment; that stretch reads LSLWACIAGTVLLVGLLVYLL. At 588–635 the chain is on the cytoplasmic side; it reads NWLNPPRLQMGSMTSTTLYNSMWFVYGSFVQQGGEVPYTTLATRMMMG. Residues 636-656 form a helical membrane-spanning segment; sequence AWWLFALIVISSYTANLAAFL. The Extracellular segment spans residues 657–830; the sequence is TITRIESSIQ…QKGGALDIKS (174 aa). N-linked (GlcNAc...) asparagine glycans are attached at residues N713 and N716. Ca(2+) is bound by residues D753, D755, and S757. A helical transmembrane segment spans residues 831 to 851; that stretch reads FAGVFCILAAGIVLSCFIAML. The Cytoplasmic segment spans residues 852–1007; it reads ETWWNKRKGS…GNDPDRGTSI (156 aa). Residue S883 is modified to Phosphoserine. T886 carries the phosphothreonine modification. Position 890 is a phosphoserine (S890). The interval 921–991 is interaction with AP4M1; sequence DFRNTHITTT…MSSIPYQPTP (71 aa). The short motif at 1005-1007 is the PDZ-binding element; that stretch reads TSI. Position 1006 is a phosphoserine (S1006).

The protein belongs to the glutamate-gated ion channel (TC 1.A.10.1) family. GRID2 subfamily. In terms of assembly, tetramer; dimer of dimers. Interacts with EML2, MAGI2 (via PDZ domains) and AP4M1. Interacts with BECN1, GOPC, GRID2IP, SHANK1 and SHANK2. Interacts with CBLN2, but not with CBLN4. Interacts with CBLN1 (via C1q domain); the interaction is CBLN1-NRX1 complex formation-dependent; CBLN1-binding is calcium-independent; CBLN1 hexamers anchor GRID2 N-terminal domain dimers to monomeric NRXN1 isoform beta; promotes synaptogenesis and mediates the D-Serine-dependent long term depression signals and AMPA receptor endocytosis.

It is found in the postsynaptic cell membrane. The enzyme catalyses Ca(2+)(in) = Ca(2+)(out). The catalysed reaction is Na(+)(in) = Na(+)(out). In terms of biological role, member of the ionotropic glutamate receptor family, which plays a crucial role in synaptic organization and signal transduction in the central nervous system. Although it shares structural features with ionotropic glutamate receptors, does not bind glutamate as a primary ligand. Promotes synaptogenesis and mediates the D-Serine-dependent long term depression signals and AMPA receptor endocytosis of cerebellar parallel fiber-Purkinje cell (PF-PC) synapses through the NRX1B-CBLN1-GRID2 triad complex. In the presence of neurexins and cerebellins, forms cation-selective channels that are proposed to be gated by glycine and D-serine. However, recent research disputes this ligand-gated cation channel activity. Cation-selective ion channel activity can be triggered by GRM1 in Purkinje cells. In Homo sapiens (Human), this protein is Glutamate receptor ionotropic, delta-2 (GRID2).